Here is a 230-residue protein sequence, read N- to C-terminus: Movement and silencing protein TGBp1 (230 aa).

A (+)RNA virus helicase ATP-binding domain is found at 1–114 (MDSIINALTS…GLALRPHFIK (114 aa)). Residues 115-230 (SVSHRLCPAT…VRSPPPHPSH (116 aa)) enclose the (+)RNA virus helicase C-terminal domain.

The protein belongs to the Tymovirales TGBp1 protein family. Homodimer and homooligomer. Interacts with capsid protein. Interacts with host AGO1; this interaction targets the host protein for degradation, thereby suppressing the antiviral RNA silencing.

It localises to the host cytoplasm. In terms of biological role, transports viral genome to neighboring plant cells directly through plasmosdesmata, without any budding. The movement protein allows efficient cell to cell propagation, by bypassing the host cell wall barrier. Increases plasmodesma size exclusion limit. Acts as a suppressor of RNA-mediated gene silencing, also known as post-transcriptional gene silencing (PTGS), a mechanism of plant viral defense that limits the accumulation of viral RNAs. This chain is Movement and silencing protein TGBp1, found in Plantago asiatica (P1AMV).